An 82-amino-acid polypeptide reads, in one-letter code: Diphthamide biosynthesis protein 3 (82 aa).

The region spanning 4 to 60 (FHDEVEIEDFQYDEDSETYFYPCPCGDNFAITKEDLENGEDVATCPSCSLIIKVIYD) is the DPH-type MB domain. Fe cation-binding residues include Cys26, Cys28, Cys48, and Cys51.

It belongs to the DPH3 family. Component of the 2-(3-amino-3-carboxypropyl)histidine synthase complex composed of DPH1, DPH2, DPH3 and a NADH-dependent reductase. Interacts with SERGEF. Requires Fe(2+) as cofactor. In terms of tissue distribution, widely expressed with highest levels in heart, liver, kidney and testis.

It is found in the cytoplasm. It localises to the nucleus. The catalysed reaction is [3Fe-4S](1+)-[protein] + Fe(2+)-[Dph3] = [3Fe-4S](0)-[protein] + Fe(3+)-[Dph3]. It carries out the reaction 2 [3Fe-4S](0)-[protein] + 2 Fe(2+)-[Dph3] + NADH = 2 [4Fe-4S](1+)-[protein] + 2 [Dph3] + NAD(+) + H(+). It functions in the pathway protein modification; peptidyl-diphthamide biosynthesis. Functionally, required for the first step of diphthamide biosynthesis, a post-translational modification of histidine which occurs in elongation factor 2. DPH1 and DPH2 transfer a 3-amino-3-carboxypropyl (ACP) group from S-adenosyl-L-methionine (SAM) to a histidine residue, the reaction is assisted by a reduction system comprising DPH3 and a NADH-dependent reductase. Acts as an electron donor to reduce the Fe-S cluster in DPH1-DPH2 keeping the [4Fe-4S] clusters in the active and reduced state. Restores iron to DPH1-DPH2 iron-sulfur clusters which have degraded from [4Fe-4S] to [3Fe-4S] by donating an iron atom to reform [4Fe-4S] clusters, in a manner dependent on the presence of elongation factor 2 and SAM. Associates with the elongator complex and is required for tRNA Wobble base modifications mediated by the elongator complex. The elongator complex is required for multiple tRNA modifications, including mcm5U (5-methoxycarbonylmethyl uridine), mcm5s 2U (5-methoxycarbonylmethyl-2-thiouridine), and ncm5U (5-carbamoylmethyl uridine). In Mus musculus (Mouse), this protein is Diphthamide biosynthesis protein 3.